The chain runs to 370 residues: Ubiquitin carboxyl-terminal hydrolase 12 (370 aa).

The Required for plasma membrane localization of USP12/WDR20 motif lies at 1 to 4; the sequence is MEIL. Residues 39–369 form the USP domain; the sequence is FGLVNFGNTC…SGYILFYQSR (331 aa). Residue C48 is the Nucleophile of the active site. Residues 145–169 are disordered; it reads KQEKQNGRLPNGNIDNENNNSTPDP. The segment covering 157–168 has biased composition (polar residues); the sequence is NIDNENNNSTPD. The Zn(2+) site is built by C186, C189, C233, and C236. The active-site Proton acceptor is H317.

The protein belongs to the peptidase C19 family. USP12/USP46 subfamily. Interacts with WDR48. Interacts with WDR20; this interaction promotes translocation of the USP12 complex to the plasma membrane. Component of the USP12-WDR20-WDR48 deubiquitinating complex. Component of the USP12-DMWD-WDR48 deubiquitinating complex. Interacts with PHLPP1. Interacts with RBPJ. Interacts with CBP; this interaction blocks the acetyltransferase activity of CREBBP. Interacts with ITCH; the interaction is more efficient when both USP12 and WDR48/UAF1 are involved and may mediate recruitment of the USP12 deubiquitinating complex to Notch. Interacts with OPTN and SQSTM1/p62; the interaction is independent of deubiquitinase activity and may be involved in regulation of autophagic flux. As to quaternary structure, (Microbial infection) Interacts with Epstein-Barr virus protein EBNA3.

Its subcellular location is the nucleus. It is found in the cytoplasm. The protein resides in the cell membrane. The catalysed reaction is Thiol-dependent hydrolysis of ester, thioester, amide, peptide and isopeptide bonds formed by the C-terminal Gly of ubiquitin (a 76-residue protein attached to proteins as an intracellular targeting signal).. Activated by interaction with WDR20, WDR48 and DMWD through different allosteric mechanisms. In terms of biological role, deubiquitinating enzyme that plays various roles in the regulation of the immune response and inflammation. During TCR engagement and activation, translocates into the cytoplasm and deubiquitinates its substrates LAT and TRAT1 and prevents their lysosome-dependent degradation to stabilize the TCR signaling complex at the plasma membrane. Plays an essential role in the selective LPS-induced macrophage response through the activation of NF-kappa-B pathway. In addition, promotes that antiviral immune response through targeting DNA sensor IFI16 to inhibit its proteasome-dependent degradation. Participates in the interferon signaling pathway and antiviral response independently of its deubiquitinase activity by maintaining nuclear phosphorylated STAT1 levels via inhibition of its CREBBP-mediated acetylation and subsequent dephosphorylation. Plays an intrinsic role in promoting the differentiation, activation and proliferation of CD4(+) T-cell by activating the NF-kappa-B signaling pathway through deubiquitinating and stabilizing B-cell lymphoma/leukemia 10/BCL10. In myeloid-derived suppressor cells promotes the activation of the NF-kappa-B via deubiquitination and stabilization of RELA. Regulates the 'Lys-63'-linked polyubiquitin chains of BAX and thereby modulates the mitochondrial apoptotic process. Negative regulator of NOTCH signaling that specifically deubiquitinates non-activated NOTCH receptors to target them for lysosomal degradation; deubiquitination of NOTCH stimulates its transport form late endosomes to lysosomes. Protects neurons against HTT/huntingtin-induced polyglutamine expansion-dependent neurodegeneration through regulation of autophagic flux. This function is independent of deubiquitinase activity or of other components of the USP12-WDR20-WDR48 deubiquitinating complex. In complex with WDR48, acts as a potential tumor suppressor by positively regulating PHLPP1 stability. (Microbial infection) Forms a complex with Epstein-Barr virus protein EBNA3 which is an active deubiquitinase activity that may select specific substrates to promote B-lymphocyte transformation. The chain is Ubiquitin carboxyl-terminal hydrolase 12 (USP12) from Homo sapiens (Human).